The sequence spans 127 residues: MFRTLMNAKIHRARVTEANLNYVGSITIDEDILDAVGMVPNEKVQIVNNNNGARFETYIIPGERGSGVFCLNGAAARLVQKDDIIIVISYVLVPEEKLTSHRPKIAIMDEHNRIKELIVQEPAATVL.

The active-site Schiff-base intermediate with substrate; via pyruvic acid is the Ser-25. Residue Ser-25 is modified to Pyruvic acid (Ser). Thr-57 is a substrate binding site. Residue Tyr-58 is the Proton donor of the active site. 73–75 (GAA) provides a ligand contact to substrate.

This sequence belongs to the PanD family. In terms of assembly, heterooctamer of four alpha and four beta subunits. It depends on pyruvate as a cofactor. Post-translationally, is synthesized initially as an inactive proenzyme, which is activated by self-cleavage at a specific serine bond to produce a beta-subunit with a hydroxyl group at its C-terminus and an alpha-subunit with a pyruvoyl group at its N-terminus.

The protein localises to the cytoplasm. It carries out the reaction L-aspartate + H(+) = beta-alanine + CO2. It participates in cofactor biosynthesis; (R)-pantothenate biosynthesis; beta-alanine from L-aspartate: step 1/1. Catalyzes the pyruvoyl-dependent decarboxylation of aspartate to produce beta-alanine. In Anoxybacillus flavithermus (strain DSM 21510 / WK1), this protein is Aspartate 1-decarboxylase.